The sequence spans 275 residues: NifU-like protein 5, mitochondrial (275 aa).

Residues 1 to 61 (MKGLTRLLNS…TNASRNCSRS (61 aa)) constitute a mitochondrion transit peptide.

Belongs to the NifU family.

The protein localises to the mitochondrion. Functionally, molecular scaffold for [Fe-S] cluster assembly of mitochondrial iron-sulfur proteins. This Arabidopsis thaliana (Mouse-ear cress) protein is NifU-like protein 5, mitochondrial (NIFU5).